Here is a 599-residue protein sequence, read N- to C-terminus: Zinc finger BED domain-containing protein 3 (599 aa).

The interval 70-104 (LNGGMGSPGNGPGTPLSRNNYAHHHQQHQNQQHVG) is disordered. Residues 72–81 (GGMGSPGNGP) show a composition bias toward gly residues. A BED-type zinc finger spans residues 123–176 (VKTAKVWRYFDELPTIEQAAECRICRKKIKATNSSTTGMIRHLRSCHVQEYQLV). Residues Cys-144, Cys-147, His-164, and His-169 each contribute to the Zn(2+) site. Disordered regions lie at residues 208 to 283 (GIEN…QCQN) and 440 to 491 (ATSS…SSID). Low complexity-rich tracts occupy residues 223–246 (SQKS…SHFS) and 268–283 (SNSI…QCQN). Positions 440-455 (ATSSYEDVSVNESQMA) are enriched in polar residues. Residues 460–483 (GDEEEEIMEEEVEEDENVEIEDDT) show a composition bias toward acidic residues.

Expressed in neuronal cell bodies in the ventral cord and HSN neurons.

It is found in the nucleus. Functionally, probable transcription factor. Involved in vulval organogenesis. During vulval development, may play a role in the regulation of cell cycle regulators such as cul-1. Positively modulates expression of homeobox protein lin-39, perhaps by binding to regulatory regions of the lin-39 gene, acting in the vulval lineage. Plays a role in larval molting. This is Zinc finger BED domain-containing protein 3 from Caenorhabditis elegans.